The sequence spans 169 residues: Probable chorismate pyruvate-lyase (169 aa).

Residues R71, I110, and E150 each contribute to the substrate site.

Belongs to the UbiC family.

The protein localises to the cytoplasm. The catalysed reaction is chorismate = 4-hydroxybenzoate + pyruvate. The protein operates within cofactor biosynthesis; ubiquinone biosynthesis. Its function is as follows. Removes the pyruvyl group from chorismate, with concomitant aromatization of the ring, to provide 4-hydroxybenzoate (4HB) for the ubiquinone pathway. This chain is Probable chorismate pyruvate-lyase, found in Acinetobacter baumannii (strain ATCC 17978 / DSM 105126 / CIP 53.77 / LMG 1025 / NCDC KC755 / 5377).